Here is a 499-residue protein sequence, read N- to C-terminus: tRNA (guanine(37)-N(1))-methyltransferase (499 aa).

A mitochondrion-targeting transit peptide spans Met1 to Thr44. Residues His268, Asp307–Leu308, Asp335–Gly336, and Asn399 each bind S-adenosyl-L-methionine.

This sequence belongs to the class I-like SAM-binding methyltransferase superfamily. TRM5/TYW2 family. As to quaternary structure, monomer.

The protein resides in the mitochondrion matrix. It is found in the nucleus. Its subcellular location is the cytoplasm. It catalyses the reaction guanosine(37) in tRNA + S-adenosyl-L-methionine = N(1)-methylguanosine(37) in tRNA + S-adenosyl-L-homocysteine + H(+). Its function is as follows. Specifically methylates the N1 position of guanosine-37 in various cytoplasmic and mitochondrial tRNAs. Methylation is not dependent on the nature of the nucleoside 5' of the target nucleoside. This is the first step in the biosynthesis of wybutosine (yW), a modified base adjacent to the anticodon of tRNAs and required for accurate decoding. Postspliced cytoplasmic tRNAs are imported into the nucleus, where this first step seems to take place, after which they are reexported to the cytoplasm, where the yW sythesis is completed by cytoplasmic enzymes. The chain is tRNA (guanine(37)-N(1))-methyltransferase from Saccharomyces cerevisiae (strain ATCC 204508 / S288c) (Baker's yeast).